The primary structure comprises 318 residues: Isoflavone reductase (318 aa).

NADP(+)-binding positions include 11–17 (GPTGAIG), Arg36, and Lys44. Residue Lys144 is the Proton acceptor of the active site. Residue Arg148 participates in NADP(+) binding.

The protein belongs to the NmrA-type oxidoreductase family. Isoflavone reductase subfamily.

The catalysed reaction is (3R)-vestitone + NADP(+) = 2'-hydroxyformononetin + NADPH + 2 H(+). It participates in phytoalexin biosynthesis; pterocarpan phytoalexin biosynthesis. Functionally, reduces achiral isoflavones to chiral isoflavanones during the biosynthesis of chiral pterocarpan phytoalexins. The chain is Isoflavone reductase (IFR) from Cicer arietinum (Chickpea).